The following is a 431-amino-acid chain: UDP-N-acetylmuramate--L-alanine ligase (431 aa).

108-114 (GAHGKST) contributes to the ATP binding site.

It belongs to the MurCDEF family.

The protein resides in the cytoplasm. The catalysed reaction is UDP-N-acetyl-alpha-D-muramate + L-alanine + ATP = UDP-N-acetyl-alpha-D-muramoyl-L-alanine + ADP + phosphate + H(+). It functions in the pathway cell wall biogenesis; peptidoglycan biosynthesis. Functionally, cell wall formation. This is UDP-N-acetylmuramate--L-alanine ligase from Campylobacter jejuni (strain RM1221).